The chain runs to 267 residues: Ribosomal RNA small subunit methyltransferase A (267 aa).

S-adenosyl-L-methionine is bound by residues Asn18, Leu20, Gly45, Glu66, Asp91, and Asn112.

The protein belongs to the class I-like SAM-binding methyltransferase superfamily. rRNA adenine N(6)-methyltransferase family. RsmA subfamily.

Its subcellular location is the cytoplasm. It catalyses the reaction adenosine(1518)/adenosine(1519) in 16S rRNA + 4 S-adenosyl-L-methionine = N(6)-dimethyladenosine(1518)/N(6)-dimethyladenosine(1519) in 16S rRNA + 4 S-adenosyl-L-homocysteine + 4 H(+). Functionally, specifically dimethylates two adjacent adenosines (A1518 and A1519) in the loop of a conserved hairpin near the 3'-end of 16S rRNA in the 30S particle. May play a critical role in biogenesis of 30S subunits. The chain is Ribosomal RNA small subunit methyltransferase A from Shewanella sediminis (strain HAW-EB3).